The sequence spans 154 residues: Crossover junction endodeoxyribonuclease RuvC (154 aa).

Catalysis depends on residues D7, E67, and D139. Mg(2+)-binding residues include D7, E67, and D139.

It belongs to the RuvC family. Homodimer which binds Holliday junction (HJ) DNA. The HJ becomes 2-fold symmetrical on binding to RuvC with unstacked arms; it has a different conformation from HJ DNA in complex with RuvA. In the full resolvosome a probable DNA-RuvA(4)-RuvB(12)-RuvC(2) complex forms which resolves the HJ. Mg(2+) serves as cofactor.

The protein resides in the cytoplasm. The enzyme catalyses Endonucleolytic cleavage at a junction such as a reciprocal single-stranded crossover between two homologous DNA duplexes (Holliday junction).. Its function is as follows. The RuvA-RuvB-RuvC complex processes Holliday junction (HJ) DNA during genetic recombination and DNA repair. Endonuclease that resolves HJ intermediates. Cleaves cruciform DNA by making single-stranded nicks across the HJ at symmetrical positions within the homologous arms, yielding a 5'-phosphate and a 3'-hydroxyl group; requires a central core of homology in the junction. The consensus cleavage sequence is 5'-(A/T)TT(C/G)-3'. Cleavage occurs on the 3'-side of the TT dinucleotide at the point of strand exchange. HJ branch migration catalyzed by RuvA-RuvB allows RuvC to scan DNA until it finds its consensus sequence, where it cleaves and resolves the cruciform DNA. This chain is Crossover junction endodeoxyribonuclease RuvC, found in Prochlorococcus marinus (strain MIT 9313).